A 287-amino-acid polypeptide reads, in one-letter code: U-megalopygitoxin(8)-Mo12 (287 aa).

Positions 1 to 17 (MNLQYLILSLLSTTVYG) are cleaved as a signal peptide. Histidine amide is present on histidine 284.

The protein belongs to the megalysin family. In terms of processing, contains 2 disulfide bonds. As to expression, expressed by the venom apparatus.

The protein resides in the secreted. The protein localises to the target cell membrane. May function as a large pore-forming protein. This Megalopyge opercularis (Southern flannel moth) protein is U-megalopygitoxin(8)-Mo12.